The chain runs to 1556 residues: Bromodomain adjacent to zinc finger domain protein 1A (1556 aa).

The segment at 1 to 128 is required for interaction with the CHRAC1-POLE3 heterodimer. Required for interaction with the CHRAC1-POLE3 heterodimer; the sequence is MPLLHRKPFV…EETVEVIRNN (128 aa). The tract at residues 1 to 133 is required for interaction with NCOR1; the sequence is MPLLHRKPFV…VIRNNGARLQ (133 aa). Residues 22 to 128 enclose the WAC domain; sequence EEVFYCKVTN…EETVEVIRNN (107 aa). Ser-270 carries the phosphoserine modification. Positions 306 to 397 form a coiled coil; it reads KERDKLLKQE…YVEYLKQWSK (92 aa). A DDT domain is found at 422 to 487; it reads PEIFGDALMV…LTAIFQAIAE (66 aa). The stretch at 634-709 forms a coiled coil; sequence IEDYVDILRQ…DISIGEEERE (76 aa). A compositionally biased stretch (basic and acidic residues) spans 662–695; it reads EAAARIRKRKEEKLKEQEQKMKEKQEKLKEDEQR. 3 disordered regions span residues 662 to 754, 841 to 877, and 941 to 966; these read EAAA…NGFK, PSSF…GPRD, and FHFS…AYDP. Residues 667–933 are required for interaction with SMARCA5 and formation of the CHRAC ISWI chromatin remodeling complex; the sequence is IRKRKEEKLK…QEKSRICAQL (267 aa). The residue at position 702 (Ser-702) is a Phosphoserine. The segment covering 703–713 has biased composition (acidic residues); it reads IGEEEREDFDT. A compositionally biased stretch (basic and acidic residues) spans 715–726; it reads IESKDTEQKELD. Positions 727–736 are enriched in acidic residues; the sequence is QDMVTEDEDD. At Thr-731 the chain carries Phosphothreonine. 2 stretches are compositionally biased toward polar residues: residues 842 to 872 and 951 to 965; these read SSFQ…SNID and SKPT…NAYD. Lys-952 participates in a covalent cross-link: Glycyl lysine isopeptide (Lys-Gly) (interchain with G-Cter in SUMO2). A phosphoserine mark is found at Ser-960 and Ser-961. A PHD-type zinc finger spans residues 1148 to 1198; sequence NARCKICRKKGDAENMVLCDGCDRGHHTYCVRPKLKTVPEGDWFCPECRPK. Disordered stretches follow at residues 1202-1376 and 1399-1431; these read RRLS…NFPN and LQES…RQGG. Acidic residues predominate over residues 1213-1258; it reads ESDEDVEDSMGGEDDEVDGDEEEGQSEEEEYEVEQDEDDSQEEEEV. Positions 1262–1276 are enriched in basic residues; sequence KRGRPQVRLPVKTRG. Positions 1277–1312 are enriched in polar residues; it reads KLSSSFSSRGQQQEPGRYPSRSQQSTPKTTVSSKTG. Phosphoserine is present on residues Ser-1281, Ser-1320, Ser-1339, Ser-1353, Ser-1363, Ser-1371, Ser-1402, Ser-1413, and Ser-1417. Polar residues predominate over residues 1363-1374; that stretch reads SANNTPENSPNF. The Bromo domain maps to 1430-1533; it reads GGVHELSAFE…AFFHIQAQKL (104 aa). At Thr-1547 the chain carries Phosphothreonine.

The protein belongs to the WAL family. Component of the ACF-1 ISWI chromatin remodeling complex at least composed of SMARCA1 and BAZ1A, which regulates the spacing of histone octamers on the DNA template to facilitate access to DNA. Within the ACF-1 ISWI chromatin remodeling complex interacts with SMARCA1; the interaction is direct. Component of the ACF-5 ISWI chromatin remodeling complex (also called the ACF complex) at least composed of BAZ1A and SMARCA5/SNF2H, which regulates the spacing of histone octamers on the DNA template to facilitate access to DNA. Within the ACF-5 ISWI chromatin remodeling complex interacts with SMARCA5/SNF2H; the interaction is direct. Component of the CHRAC ISWI chromatin remodeling complex at least composed of SMARCA5/SNF2H, BAZ1A/ACF1, CHRAC1 and POLE3; the complex preferentially binds DNA through the CHRAC1-POLE3 heterodimer and possesses ATP-dependent nucleosome-remodeling activity. Within the complex interacts (via N-terminus) with POLE3-CHRAC1 heterodimer; the interaction is direct and is required for the complex to preferentially bind to DNA. Within the complex interacts with SMARCA5/SNF2H; the interaction is direct and promotes the interaction with the POLE3-CHRAC1 heterodimer. Interacts with NCOR1 (via its RD1 domain); the interaction corepresses a number of NCOR1-regulated genes. In terms of tissue distribution, highly expressed in testis and at low or undetectable levels in other tissues analyzed.

The protein resides in the nucleus. Regulatory subunit of the ATP-dependent ACF-1 and ACF-5 ISWI chromatin remodeling complexes, which form ordered nucleosome arrays on chromatin and slide edge- and center-positioned histone octamers away from their original location on the DNA template to facilitate access to DNA during DNA-templated processes such as DNA replication, transcription, and repair. Both complexes regulate the spacing of nucleosomes along the chromatin and have the ability to slide mononucleosomes to the center of a DNA template in an ATP-dependent manner. The ACF-1 ISWI chromatin remodeling complex has a lower ATP hydrolysis rate than the ACF-5 ISWI chromatin remodeling complex. Has a role in sensing the length of DNA which flank nucleosomes, which modulates the nucleosome spacing activity of the ACF-5 ISWI chromatin remodeling complex. Involved in DNA replication and together with SMARCA5/SNF2H is required for replication of pericentric heterochromatin in S-phase. May have a role in nuclear receptor-mediated transcription repression. In Homo sapiens (Human), this protein is Bromodomain adjacent to zinc finger domain protein 1A (BAZ1A).